A 364-amino-acid polypeptide reads, in one-letter code: Aminomethyltransferase (364 aa).

It belongs to the GcvT family. The glycine cleavage system is composed of four proteins: P, T, L and H.

It carries out the reaction N(6)-[(R)-S(8)-aminomethyldihydrolipoyl]-L-lysyl-[protein] + (6S)-5,6,7,8-tetrahydrofolate = N(6)-[(R)-dihydrolipoyl]-L-lysyl-[protein] + (6R)-5,10-methylene-5,6,7,8-tetrahydrofolate + NH4(+). Functionally, the glycine cleavage system catalyzes the degradation of glycine. This chain is Aminomethyltransferase, found in Photorhabdus laumondii subsp. laumondii (strain DSM 15139 / CIP 105565 / TT01) (Photorhabdus luminescens subsp. laumondii).